Reading from the N-terminus, the 457-residue chain is Phosphoglucosamine mutase (457 aa).

Catalysis depends on Ser109, which acts as the Phosphoserine intermediate. Positions 109, 251, 253, and 255 each coordinate Mg(2+). Ser109 is subject to Phosphoserine.

This sequence belongs to the phosphohexose mutase family. It depends on Mg(2+) as a cofactor. Activated by phosphorylation.

The catalysed reaction is alpha-D-glucosamine 1-phosphate = D-glucosamine 6-phosphate. Its function is as follows. Catalyzes the conversion of glucosamine-6-phosphate to glucosamine-1-phosphate. In Bdellovibrio bacteriovorus (strain ATCC 15356 / DSM 50701 / NCIMB 9529 / HD100), this protein is Phosphoglucosamine mutase.